A 161-amino-acid chain; its full sequence is Probable chemoreceptor glutamine deamidase CheD (161 aa).

Belongs to the CheD family.

It carries out the reaction L-glutaminyl-[protein] + H2O = L-glutamyl-[protein] + NH4(+). In terms of biological role, probably deamidates glutamine residues to glutamate on methyl-accepting chemotaxis receptors (MCPs), playing an important role in chemotaxis. The sequence is that of Probable chemoreceptor glutamine deamidase CheD from Syntrophomonas wolfei subsp. wolfei (strain DSM 2245B / Goettingen).